We begin with the raw amino-acid sequence, 191 residues long: Adenine phosphoribosyltransferase 5 (191 aa).

This sequence belongs to the purine/pyrimidine phosphoribosyltransferase family. As to quaternary structure, homodimer.

It is found in the cytoplasm. It catalyses the reaction AMP + diphosphate = 5-phospho-alpha-D-ribose 1-diphosphate + adenine. Its pathway is purine metabolism; AMP biosynthesis via salvage pathway; AMP from adenine: step 1/1. Functionally, catalyzes a salvage reaction resulting in the formation of AMP, that is energically less costly than de novo synthesis. May contribute to the recycling of adenine into adenylate nucleotides and the inactivation of cytokinins by phosphoribosylation. Possesses low activity toward adenine, but can efficiently convert cytokinins from free bases (active form) to the corresponding nucleotides (inactive form). The protein is Adenine phosphoribosyltransferase 5 (APT5) of Arabidopsis thaliana (Mouse-ear cress).